Reading from the N-terminus, the 358-residue chain is Putative movement protein (358 aa).

Functionally, transports viral genome to neighboring plant cells directly through plasmosdesmata, without any budding. The movement protein allows efficient cell to cell propagation, by bypassing the host cell wall barrier (Potential). The sequence is that of Putative movement protein from Raspberry bushy dwarf virus (isolate Malling Jewel raspberry/R15) (RBDV).